The following is a 1134-amino-acid chain: Early transcription factor large subunit homolog (1134 aa).

The Helicase ATP-binding domain maps to 52-352 (KGGRAFFPCD…PNGQPLQRQQ (301 aa)). 99–106 (WQTGTGKS) provides a ligand contact to ATP. The DEAH box motif lies at 281–284 (DEIH). The 202-residue stretch at 524-725 (MMKDILSIIR…EGDKALRKHA (202 aa)) folds into the Helicase C-terminal domain.

This sequence belongs to the DEAD box helicase family. DEAH subfamily.

The protein resides in the virion. The catalysed reaction is ATP + H2O = ADP + phosphate + H(+). Functionally, putative initation factor. In African swine fever virus (isolate Pig/Kenya/KEN-50/1950) (ASFV), this protein is Early transcription factor large subunit homolog.